Reading from the N-terminus, the 701-residue chain is Peptide transporter CstA (701 aa).

The Cytoplasmic segment spans residues 1-6; it reads MNKSGK. Residues 7 to 27 traverse the membrane as a helical segment; the sequence is YLVWTVLSVMGAFALGYIALN. The Periplasmic portion of the chain corresponds to 28–33; sequence RGEQIN. The chain crosses the membrane as a helical span at residues 34–54; sequence ALWIVVASVCIYLIAYRFYGL. The Cytoplasmic segment spans residues 55-86; it reads YIAKNVLAVDPTRMTPAVRHNDGLDYVPTDKK. A helical transmembrane segment spans residues 87-107; sequence VLFGHHFAAIAGAGPLVGPVL. Topologically, residues 108–117 are periplasmic; that stretch reads AAQMGYLPGM. Residues 118-138 form a helical membrane-spanning segment; the sequence is IWLLAGVVLAGAVQDFMVLFV. Topologically, residues 139 to 160 are cytoplasmic; it reads STRRDGRSLGELVKEEMGPTAG. Residues 161–181 form a helical membrane-spanning segment; that stretch reads VIALVACFMIMVIILAVLAMI. Residues 182 to 189 lie on the Periplasmic side of the membrane; the sequence is VVKALTHS. A helical membrane pass occupies residues 190 to 210; the sequence is PWGTYTVAFTIPLALFMGIYL. The Cytoplasmic portion of the chain corresponds to 211 to 217; the sequence is RYLRPGR. A helical membrane pass occupies residues 218–238; that stretch reads IGEVSVIGLVFLIFAIISGGW. Residues 239–255 are Periplasmic-facing; that stretch reads VAESPTWAPYFDFTGVQ. Residues 256–276 form a helical membrane-spanning segment; sequence LTWMLVGYGFVAAVLPVWLLL. Topologically, residues 277 to 280 are cytoplasmic; it reads APRD. The helical transmembrane segment at 281-301 threads the bilayer; it reads YLSTFLKIGTIVGLAVGILIM. The Periplasmic segment spans residues 302-324; sequence RPTLTMPALTKFVDGTGPVWTGN. Residues 325-345 traverse the membrane as a helical segment; sequence LFPFLFITIACGAVSGFHALI. At 346 to 372 the chain is on the cytoplasmic side; it reads SSGTTPKMLANEGQACFIGYGGMLMES. Residues 373–393 traverse the membrane as a helical segment; the sequence is FVAIMALVSACIIDPGVYFAM. Over 394–395 the chain is Periplasmic; it reads NS. The chain crosses the membrane as a helical span at residues 396–416; the sequence is PMAVLAPAGTADVVASAAQVV. The Cytoplasmic portion of the chain corresponds to 417-439; sequence SSWGFSITPDTLNQIASEVGEQS. Residues 440 to 460 form a helical membrane-spanning segment; the sequence is IISRAGGAPTLAVGMAYILHG. Topologically, residues 461 to 463 are periplasmic; the sequence is ALG. A helical membrane pass occupies residues 464–484; sequence GMMDVAFWYHFAILFEALFIL. Topologically, residues 485-523 are cytoplasmic; sequence TAVDAGTRAARFMLQDLLGVVSPGLKRTDSLPANLLATA. Residues 524–544 form a helical membrane-spanning segment; sequence LCVLAWGYFLHQGVVDPLGGI. Residues 545–550 are Periplasmic-facing; that stretch reads NTLWPL. The chain crosses the membrane as a helical span at residues 551 to 571; sequence FGIANQMLAGMALMLCAVVLF. Over 572–577 the chain is Cytoplasmic; it reads KMKRQR. A helical transmembrane segment spans residues 578–598; the sequence is YAWVALVPTAWLLICTLTAGW. Over 599-643 the chain is Periplasmic; it reads QKAFSPDAKVGFLAIANKFQAMIDSGNIPSQYTESQLAQLVFNNR. A helical membrane pass occupies residues 644-664; it reads LDAGLTIFFMVVVVVLALFSI. The Cytoplasmic portion of the chain corresponds to 665–701; sequence KTALAALKDPKPTAKETPYEPMPENVEEIVAQAKGAH.

This sequence belongs to the peptide transporter carbon starvation (CstA) (TC 2.A.114) family.

It is found in the cell inner membrane. Involved in peptide utilization during carbon starvation. The sequence is that of Peptide transporter CstA from Escherichia coli (strain K12).